The sequence spans 539 residues: Sporozoite-associated protein (539 aa).

5 N-linked (GlcNAc...) asparagine glycosylation sites follow: Asn-31, Asn-90, Asn-102, Asn-149, and Asn-167. Residues 126–153 (LTQSPPPAAAPQSPSPRAILSPRNVSKT) are disordered. A compositionally biased stretch (low complexity) spans 192–215 (VVAEKSNTPTTPKTTPNGKWTGKN). The interval 192-231 (VVAEKSNTPTTPKTTPNGKWTGKNANATIETSNTDHTPPS) is disordered. The segment covering 216 to 228 (ANATIETSNTDHT) has biased composition (polar residues). N-linked (GlcNAc...) asparagine glycosylation is found at Asn-217, Asn-271, and Asn-288. The disordered stretch occupies residues 303–355 (TLISRAQDDKPGTKGGSDETSSSTAASNERQPMFPNDNDDDDIDQTYCPGVES). Residues 320–332 (DETSSSTAASNER) show a composition bias toward polar residues. 2 N-linked (GlcNAc...) asparagine glycosylation sites follow: Asn-427 and Asn-503.

In terms of tissue distribution, saliva (at protein level). Female salivary gland. Female midgut.

It is found in the secreted. In terms of biological role, binds heparan sulfate proteoglycans present on the mammalian cell surface. Modulates host immune responses at the site of inoculation via decreasing the expression of TNF-alpha/TNF, IL-1beta/IL1B, IFN-gamma/IFNG, IL4, MMP9, TGF-beta and ICAM1. Its function is as follows. (Microbial infection) Interacts with the surface of Plasmodium berghei sporozoites. Promotes Plasmodium berghei transmission to the mouse host. Does not affect Plasmodium berghei sporozoite viability. (Microbial infection) Interacts with the surface of Plasmodium falciparum sporozoites. The polypeptide is Sporozoite-associated protein (Anopheles gambiae (African malaria mosquito)).